We begin with the raw amino-acid sequence, 744 residues long: MTVATPYFQQGSEIALLNGEYTDVFSLLGMHSVNDGKALVVRCLIPGAISVDVLSAKDGRKVATLEQVNEHGLFAGKMGRRVKSFAYLLRVQYPLCEQLINDPYQFDSLLNPDDVYLFGEGSQLQTYHFQGANWREHHGVKGVHFCVWAPNAKQVAVMGDFNLWDNKRHILRHHPASGLWDIFIAEVEPEQHYKYAISDMHGNQVIKSDPYAVAMQPSPHNASKIPHVERYDWQDSQWLADRASHQPHVQPMSIYEVQLASWRRKGDDSQEYTDYSQLIAELVPYIKEMGFTHLQLMPISEYPFDGSWGYQPVGLFAPTYRFGDANGLRAFIDECHQQGIAVLLDWVPAHFPRDPHGLVRFDGSCLYEHDDPRKGEQPDWDTLIYNYGRAEVRSFLYSNAHYWLDEFHFDGLRLDAVSSMLYLDYSRRADQWIPNKFGGRENLEAISFLQELNARMYQCFPGINMIAEESTAWPGVTQATSNNGLGFGFKWNMGWMNDTLRYISCDPLFRRYHHGELTFSLVYAFTEQFILSLSHDEVVHGKGSLLHKIPGDDWQKFATLRAYYGFMWTHPGKKLLFMGNEFAQRNEWNHNQSLDWHLLTYAPHQGVQDWVRDLNQCYQQYPALYQRDHHSDGFQWLDCNNADNNILVFCRFGMDKQQHVVIVVNMSPQVYYDFRVGVPTAQNYRELLNSDHRHYGGGDVVNDNPCEAQVTPWQGMSHSIVITVPPLGCSIWVPELDEQDQPTQ.

Asp-415 acts as the Nucleophile in catalysis. Glu-468 serves as the catalytic Proton donor.

It belongs to the glycosyl hydrolase 13 family. GlgB subfamily. Monomer.

The catalysed reaction is Transfers a segment of a (1-&gt;4)-alpha-D-glucan chain to a primary hydroxy group in a similar glucan chain.. It functions in the pathway glycan biosynthesis; glycogen biosynthesis. In terms of biological role, catalyzes the formation of the alpha-1,6-glucosidic linkages in glycogen by scission of a 1,4-alpha-linked oligosaccharide from growing alpha-1,4-glucan chains and the subsequent attachment of the oligosaccharide to the alpha-1,6 position. The protein is 1,4-alpha-glucan branching enzyme GlgB of Shewanella frigidimarina (strain NCIMB 400).